The chain runs to 105 residues: Protein RALF-like 21 (105 aa).

A signal peptide spans 1 to 30 (MSNMKITNRFMLVATFIACVFISSMNMTVG). 2 disulfides stabilise this stretch: Cys-44–Cys-53 and Cys-67–Cys-73.

This sequence belongs to the plant rapid alkalinization factor (RALF) family. As to expression, expressed in seeds and rosettes.

The protein localises to the secreted. In terms of biological role, cell signaling peptide that may regulate plant stress, growth, and development. Mediates a rapid alkalinization of extracellular space by mediating a transient increase in the cytoplasmic Ca(2+) concentration leading to a calcium-dependent signaling events through a cell surface receptor and a concomitant activation of some intracellular mitogen-activated protein kinases. This Arabidopsis thaliana (Mouse-ear cress) protein is Protein RALF-like 21 (RALFL21).